The primary structure comprises 539 residues: Probable methionine--tRNA ligase, mitochondrial (539 aa).

The 'HIGH' region signature appears at 28–38 (FYVNAAPHLGH). A 'KMSKS' region motif is present at residues 326–330 (KMSKS). Position 329 (Lys-329) interacts with ATP.

Belongs to the class-I aminoacyl-tRNA synthetase family.

It is found in the mitochondrion matrix. The enzyme catalyses tRNA(Met) + L-methionine + ATP = L-methionyl-tRNA(Met) + AMP + diphosphate. The sequence is that of Probable methionine--tRNA ligase, mitochondrial from Schizosaccharomyces pombe (strain 972 / ATCC 24843) (Fission yeast).